Consider the following 254-residue polypeptide: Alcohol dehydrogenase (254 aa).

Residue 10-33 (FVAGLGGIGLDTSREIVKSGPKNL) participates in NAD(+) binding. Residue S138 coordinates substrate. The active-site Proton acceptor is the Y151.

It belongs to the short-chain dehydrogenases/reductases (SDR) family. In terms of assembly, homodimer.

It catalyses the reaction a primary alcohol + NAD(+) = an aldehyde + NADH + H(+). The catalysed reaction is a secondary alcohol + NAD(+) = a ketone + NADH + H(+). The polypeptide is Alcohol dehydrogenase (Adh) (Drosophila picticornis (Fruit fly)).